The primary structure comprises 261 residues: uncharacterized protein (261 aa).

The N-terminal stretch at M1 to G22 is a signal peptide. Residue C23 is the site of N-palmitoyl cysteine attachment. C23 carries S-diacylglycerol cysteine lipidation.

Belongs to the staphylococcal tandem lipoprotein family.

It is found in the cell membrane. This is an uncharacterized protein from Staphylococcus aureus (strain N315).